A 372-amino-acid polypeptide reads, in one-letter code: Geranylgeranyl pyrophosphate synthase 4 (372 aa).

The N-terminal stretch at 1-22 is a signal peptide; that stretch reads MEAQNIFLYLLIVFLSLHFVFT. Lys-121, Arg-124, and His-153 together coordinate isopentenyl diphosphate. Asp-160 and Asp-166 together coordinate Mg(2+). Arg-171 lines the dimethylallyl diphosphate pocket. Arg-172 provides a ligand contact to isopentenyl diphosphate. Dimethylallyl diphosphate contacts are provided by Lys-257, Thr-258, Gln-295, Lys-312, and Lys-322.

Belongs to the FPP/GGPP synthase family. In terms of assembly, monomer. Mg(2+) is required as a cofactor. Faintly expressed in flowers. Expressed in roots and siliques.

The protein localises to the endoplasmic reticulum. The catalysed reaction is isopentenyl diphosphate + dimethylallyl diphosphate = (2E)-geranyl diphosphate + diphosphate. The enzyme catalyses isopentenyl diphosphate + (2E)-geranyl diphosphate = (2E,6E)-farnesyl diphosphate + diphosphate. It catalyses the reaction isopentenyl diphosphate + (2E,6E)-farnesyl diphosphate = (2E,6E,10E)-geranylgeranyl diphosphate + diphosphate. It participates in isoprenoid biosynthesis; farnesyl diphosphate biosynthesis; farnesyl diphosphate from geranyl diphosphate and isopentenyl diphosphate: step 1/1. The protein operates within isoprenoid biosynthesis; geranyl diphosphate biosynthesis; geranyl diphosphate from dimethylallyl diphosphate and isopentenyl diphosphate: step 1/1. Its pathway is isoprenoid biosynthesis; geranylgeranyl diphosphate biosynthesis; geranylgeranyl diphosphate from farnesyl diphosphate and isopentenyl diphosphate: step 1/1. Functionally, catalyzes the trans-addition of the three molecules of isopentenyl diphosphate (IPP) onto dimethylallyl diphosphate (DMAPP) to form geranylgeranyl diphosphate. This Arabidopsis thaliana (Mouse-ear cress) protein is Geranylgeranyl pyrophosphate synthase 4.